A 460-amino-acid chain; its full sequence is Ribulose bisphosphate carboxylase large chain (460 aa).

Residue Lys-4 is modified to N6,N6,N6-trimethyllysine. Positions 113 and 163 each coordinate substrate. Residue Lys-165 is the Proton acceptor of the active site. Residue Lys-167 participates in substrate binding. Lys-191, Asp-193, and Glu-194 together coordinate Mg(2+). Lys-191 bears the N6-carboxylysine mark. His-284 acts as the Proton acceptor in catalysis. Arg-285, His-317, and Ser-369 together coordinate substrate.

It belongs to the RuBisCO large chain family. Type I subfamily. As to quaternary structure, heterohexadecamer of 8 large chains and 8 small chains. Mg(2+) is required as a cofactor.

The protein localises to the plastid. Its subcellular location is the chloroplast. It carries out the reaction 2 (2R)-3-phosphoglycerate + 2 H(+) = D-ribulose 1,5-bisphosphate + CO2 + H2O. The catalysed reaction is D-ribulose 1,5-bisphosphate + O2 = 2-phosphoglycolate + (2R)-3-phosphoglycerate + 2 H(+). Its function is as follows. RuBisCO catalyzes two reactions: the carboxylation of D-ribulose 1,5-bisphosphate, the primary event in carbon dioxide fixation, as well as the oxidative fragmentation of the pentose substrate in the photorespiration process. Both reactions occur simultaneously and in competition at the same active site. The polypeptide is Ribulose bisphosphate carboxylase large chain (Cunninghamia lanceolata (China fir)).